Reading from the N-terminus, the 302-residue chain is Tyrosine--tRNA ligase 2 (302 aa).

Tyr33 provides a ligand contact to L-tyrosine. The short motif at 38 to 47 (PTADSLHLGH) is the 'HIGH' region element. The L-tyrosine site is built by Tyr160 and Gln164. Positions 220–224 (KFGKS) match the 'KMSKS' region motif. Lys223 is an ATP binding site.

The protein belongs to the class-I aminoacyl-tRNA synthetase family. TyrS type 1 subfamily. Homodimer.

The protein resides in the cytoplasm. The catalysed reaction is tRNA(Tyr) + L-tyrosine + ATP = L-tyrosyl-tRNA(Tyr) + AMP + diphosphate + H(+). Catalyzes the attachment of tyrosine to tRNA(Tyr) in a two-step reaction: tyrosine is first activated by ATP to form Tyr-AMP and then transferred to the acceptor end of tRNA(Tyr). This Streptococcus thermophilus (strain CNRZ 1066) protein is Tyrosine--tRNA ligase 2 (tyrS2).